A 509-amino-acid chain; its full sequence is Anaerobic nitric oxide reductase transcription regulator NorR (509 aa).

Aspartate 56 bears the 4-aspartylphosphate mark. The Sigma-54 factor interaction domain occupies 186–415 (MIGRSPAMDR…LEHAIHRAAV (230 aa)). ATP is bound by residues 214 to 221 (GETGVGKE) and 277 to 286 (ADKGTLFLDE). The segment at residues 484–503 (WAATARALEMDGGNLHRLAR) is a DNA-binding region (H-T-H motif).

Its pathway is nitrogen metabolism; nitric oxide reduction. Functionally, required for the expression of anaerobic nitric oxide (NO) reductase, acts as a transcriptional activator for at least the norVW operon. Activation also requires sigma-54. The chain is Anaerobic nitric oxide reductase transcription regulator NorR from Aeromonas salmonicida (strain A449).